A 464-amino-acid polypeptide reads, in one-letter code: MKIELAKTEIIHFVGIGGIGMSGLALIMKRMGFNVQGSDVLGNKNIERLKKDKIKITISHTKKNIAKATIVVISSAIKNNNPELIEAKLKQLPIYKRGEMLANIVSLTKNIVVTGSHGKTTTTSLLASIFSKTKLDPTIINGGVLNAIKNSAKLGKSDWCILEADESDGSFIHVPPTYSIVTNIDREHMDFYNSMKDLKELFIKFINKVPSFGKSFICIDDKNNKDLLSKLKMKNYYTYGTDNKSNFYIKNIKQEKEYSQYDLAINLPGKKNLTIRKIKLPLLGIHNIRNSTAAIAVAVTIGISQNIIKKGLKEFKGVQRRFNKIFTHRETNFYDDYAHHPTEIREVLNGVRAAYKNEEVICIFQPHRISRLKDLKKEFSLSFKKADVVILCPIYTAGEKIKLGFKYNNFAKDIVKNSKVRLFMVEDQYQLAKFIKNTIFGKKIVVGMGAGTISAWMRQLPELI.

115 to 121 (GSHGKTT) is a binding site for ATP.

The protein belongs to the MurCDEF family.

Its subcellular location is the cytoplasm. It carries out the reaction UDP-N-acetyl-alpha-D-muramate + L-alanine + ATP = UDP-N-acetyl-alpha-D-muramoyl-L-alanine + ADP + phosphate + H(+). The protein operates within cell wall biogenesis; peptidoglycan biosynthesis. Its function is as follows. Cell wall formation. This chain is UDP-N-acetylmuramate--L-alanine ligase, found in Pelagibacter ubique (strain HTCC1062).